A 148-amino-acid chain; its full sequence is Lysozyme C (148 aa).

Residues 1–18 form the signal peptide; sequence MRALIILGLVLLSVTVQG. The C-type lysozyme domain maps to 19-148; the sequence is KIFERCELAR…VSQYVKGCGV (130 aa). 4 disulfide bridges follow: Cys-24-Cys-146, Cys-48-Cys-134, Cys-83-Cys-99, and Cys-95-Cys-113. Residues Glu-53 and Asp-71 contribute to the active site.

The protein belongs to the glycosyl hydrolase 22 family. In terms of assembly, monomer.

It localises to the secreted. It catalyses the reaction Hydrolysis of (1-&gt;4)-beta-linkages between N-acetylmuramic acid and N-acetyl-D-glucosamine residues in a peptidoglycan and between N-acetyl-D-glucosamine residues in chitodextrins.. In terms of biological role, lysozymes have primarily a bacteriolytic function; those in tissues and body fluids are associated with the monocyte-macrophage system and enhance the activity of immunoagents. Also plays a role in digestion in this species. The protein is Lysozyme C (LYZ) of Trachypithecus francoisi (Francois' leaf monkey).